Here is a 178-residue protein sequence, read N- to C-terminus: Small ribosomal subunit protein uS5 (178 aa).

In terms of domain architecture, S5 DRBM spans 13–76 (LEERVVQINR…EAAKRNLIRV (64 aa)). Residues 156 to 178 (ASRRDMTPQELMERRTRRETEAA) are disordered.

Belongs to the universal ribosomal protein uS5 family. In terms of assembly, part of the 30S ribosomal subunit. Contacts proteins S4 and S8.

With S4 and S12 plays an important role in translational accuracy. Functionally, located at the back of the 30S subunit body where it stabilizes the conformation of the head with respect to the body. The sequence is that of Small ribosomal subunit protein uS5 from Chloroflexus aurantiacus (strain ATCC 29364 / DSM 637 / Y-400-fl).